Reading from the N-terminus, the 294-residue chain is 4-hydroxy-tetrahydrodipicolinate synthase (294 aa).

Residue T48 coordinates pyruvate. Residue Y136 is the Proton donor/acceptor of the active site. The Schiff-base intermediate with substrate role is filled by K164. Pyruvate is bound at residue I206.

It belongs to the DapA family. As to quaternary structure, homotetramer; dimer of dimers.

Its subcellular location is the cytoplasm. It carries out the reaction L-aspartate 4-semialdehyde + pyruvate = (2S,4S)-4-hydroxy-2,3,4,5-tetrahydrodipicolinate + H2O + H(+). The protein operates within amino-acid biosynthesis; L-lysine biosynthesis via DAP pathway; (S)-tetrahydrodipicolinate from L-aspartate: step 3/4. Functionally, catalyzes the condensation of (S)-aspartate-beta-semialdehyde [(S)-ASA] and pyruvate to 4-hydroxy-tetrahydrodipicolinate (HTPA). In Phenylobacterium zucineum (strain HLK1), this protein is 4-hydroxy-tetrahydrodipicolinate synthase.